The sequence spans 300 residues: Shikimate kinase, chloroplastic (300 aa).

The transit peptide at 1–65 (MEARVSQSLQ…SDRRVQLKVS (65 aa)) directs the protein to the chloroplast. 111-118 (GMMGCGKT) contacts ATP. A Mg(2+)-binding site is contributed by Thr-118. Substrate contacts are provided by Asp-136, Arg-161, and Gly-183. An ATP-binding site is contributed by Arg-222.

Belongs to the shikimate kinase family. It depends on Mg(2+) as a cofactor.

The protein resides in the plastid. It localises to the chloroplast. The enzyme catalyses shikimate + ATP = 3-phosphoshikimate + ADP + H(+). Its pathway is metabolic intermediate biosynthesis; chorismate biosynthesis; chorismate from D-erythrose 4-phosphate and phosphoenolpyruvate: step 5/7. In terms of biological role, catalyzes the specific phosphorylation of the 3-hydroxyl group of shikimic acid using ATP as a cosubstrate. This chain is Shikimate kinase, chloroplastic (SK), found in Solanum lycopersicum (Tomato).